The following is a 422-amino-acid chain: Ameloblastin (422 aa).

An N-terminal signal peptide occupies residues 1-26; the sequence is MSASKIPLFKMKGLLLFLSLVKMSLA. A Hydroxyproline modification is found at P42. S48 carries the post-translational modification Phosphoserine. S117 carries O-linked (GalNAc...) serine glycosylation. Residues 271 to 321 form a disordered region; it reads GLNQNSPKGGDFTVEVDSPVSVTKGPEKGEGPEGSPLQEASPDKGENPALL.

The protein belongs to the ameloblastin family. As to expression, ameloblast-specific.

It is found in the secreted. The protein resides in the extracellular space. The protein localises to the extracellular matrix. Its function is as follows. Involved in the mineralization and structural organization of enamel. The chain is Ameloblastin (Ambn) from Rattus norvegicus (Rat).